A 104-amino-acid chain; its full sequence is L-rhamnose mutarotase (104 aa).

Residue Y18 participates in substrate binding. The Proton donor role is filled by H22. Residues Y41 and 76–77 (WW) each bind substrate.

It belongs to the rhamnose mutarotase family. Homodimer.

It is found in the cytoplasm. It carries out the reaction alpha-L-rhamnose = beta-L-rhamnose. It participates in carbohydrate metabolism; L-rhamnose metabolism. Its function is as follows. L-rhamnose mutarotase involved in ulvan degradation. Ulvan is the main polysaccharide component of the Ulvales (green seaweed) cell wall. It is composed of disaccharide building blocks comprising 3-sulfated rhamnose (Rha3S) linked to D-glucuronic acid (GlcA), L-iduronic acid (IduA), or D-xylose (Xyl). L-rhamnose mutarotase catalyzes the anomeric conversion of alpha- to beta-L-rhamnose. In Formosa agariphila (strain DSM 15362 / KCTC 12365 / LMG 23005 / KMM 3901 / M-2Alg 35-1), this protein is L-rhamnose mutarotase (rhaM).